A 401-amino-acid chain; its full sequence is Methyltransferase cfoC (401 aa).

Residue Asp268 coordinates S-adenosyl-L-methionine. The active-site Proton acceptor is His308.

The protein belongs to the class I-like SAM-binding methyltransferase superfamily. Cation-independent O-methyltransferase family.

It participates in secondary metabolite biosynthesis; flavonoid biosynthesis. Functionally, methyltransferase; part of the gene cluster that mediates the biosynthesis of chlorflavonin, a fungal flavonoid with acetolactate synthase inhibitory activity. Within the pathway, cfoC is responsible for the methylation at position C8-OH of flavonoid. The pathway begins with the PKS-NRPS hybrid synthetase cfoA that uses benzoic acid or p-hydroxybenzoic acid as a starter unit with four rounds of chain elongation using malonyl-CoA to form the chalcone skeleton. Then, a new type of chalcone isomerase, cfoK, catalyzes the conversion of the chalcone into a flavanone by a histidine-mediated oxa-Michael addition mechanism. The desaturation of flavanone to flavone is catalyzed by a new type of flavone synthase, the flavin mononucleotide (FMN)-dependent oxidoreductase cfoJ. Monooxygenases cfoF, cfoG, and P450 cfoH are responsible for the hydroxylation of the flavonoid skeleton at sites C3, C8, and C2', respectively. Like cfoF, the dehydratase cfoI also plays a role in the hydroxylation of position C3. Methyltransferases cfoB, cfoC, and cfoD then catalyze the methylation of C7-OH, C8-OH, and C3-OH, respectively. Finally, the monooxygenase cfoE is responsible for the chlorination of flavonoid at position C3'. The sequence is that of Methyltransferase cfoC from Aspergillus candidus.